Here is a 205-residue protein sequence, read N- to C-terminus: Ribonuclease HII (205 aa).

The RNase H type-2 domain occupies 16–205 (VSEVGIDEVG…KSFLKKSKLI (190 aa)). A divalent metal cation is bound by residues D22, E23, and D118.

The protein belongs to the RNase HII family. The cofactor is Mn(2+). It depends on Mg(2+) as a cofactor.

It is found in the cytoplasm. The catalysed reaction is Endonucleolytic cleavage to 5'-phosphomonoester.. Endonuclease that specifically degrades the RNA of RNA-DNA hybrids. In Prochlorococcus marinus (strain AS9601), this protein is Ribonuclease HII.